The chain runs to 198 residues: Peroxiredoxin-2 (198 aa).

N-acetylalanine is present on A2. A Thioredoxin domain is found at 6–164; it reads ARIGKPAPDF…ALRLVQAFQY (159 aa). C51 functions as the Cysteine sulfenic acid (-SOH) intermediate in the catalytic mechanism. S112 bears the Phosphoserine mark. Residue T182 is modified to Phosphothreonine. N6-acetyllysine is present on K196.

Belongs to the peroxiredoxin family. AhpC/Prx1 subfamily. As to quaternary structure, homodimer; disulfide-linked, upon oxidation. 5 homodimers assemble to form a ring-like decamer. Interacts with TIPIN. The enzyme can be inactivated by further oxidation of the cysteine sulfenic acid (C(P)-SOH) to sulphinic acid (C(P)-SO2H) instead of its condensation to a disulfide bond. It can be reactivated by forming a transient disulfide bond with sulfiredoxin SRXN1, which reduces the cysteine sulfinic acid in an ATP- and Mg-dependent manner. In terms of processing, acetylation increases resistance to transition to high molecular-mass complexes. Deacetylated by HDAC6 which decreases reducing activity.

The protein localises to the cytoplasm. It carries out the reaction a hydroperoxide + [thioredoxin]-dithiol = an alcohol + [thioredoxin]-disulfide + H2O. Thiol-specific peroxidase that catalyzes the reduction of hydrogen peroxide and organic hydroperoxides to water and alcohols, respectively. Plays a role in cell protection against oxidative stress by detoxifying peroxides and as sensor of hydrogen peroxide-mediated signaling events. Might participate in the signaling cascades of growth factors and tumor necrosis factor-alpha by regulating the intracellular concentrations of H(2)O(2). In Macaca fascicularis (Crab-eating macaque), this protein is Peroxiredoxin-2 (PRDX2).